Here is a 157-residue protein sequence, read N- to C-terminus: Ribosomal RNA large subunit methyltransferase H (157 aa).

S-adenosyl-L-methionine is bound by residues L73, G105, and L124–F129.

The protein belongs to the RNA methyltransferase RlmH family. In terms of assembly, homodimer.

The protein localises to the cytoplasm. It carries out the reaction pseudouridine(1915) in 23S rRNA + S-adenosyl-L-methionine = N(3)-methylpseudouridine(1915) in 23S rRNA + S-adenosyl-L-homocysteine + H(+). Specifically methylates the pseudouridine at position 1915 (m3Psi1915) in 23S rRNA. The protein is Ribosomal RNA large subunit methyltransferase H of Flavobacterium psychrophilum (strain ATCC 49511 / DSM 21280 / CIP 103535 / JIP02/86).